The sequence spans 1574 residues: Disco-interacting protein 2 homolog B (1574 aa).

A phosphoserine mark is found at serine 9, serine 50, and serine 53. One can recognise a DMAP1-binding domain in the interval 12-130 (AVAALPPEVR…PMPTKRRSTF (119 aa)). Positions 31–166 (LSEGDITQKG…AALSAALQQS (136 aa)) are disordered. The span at 52–62 (YSPQTQETDSI) shows a compositional bias: polar residues. Positions 69 to 82 (QTPAPTAAQTSAPS) are enriched in low complexity. Position 70 is a phosphothreonine (threonine 70). The span at 91 to 103 (GARDERYRSDIHT) shows a compositional bias: basic and acidic residues. Residue serine 99 is modified to Phosphoserine. Threonine 139 is modified (phosphothreonine). Phosphoserine occurs at positions 145, 147, and 152. Positions 154 to 166 (RRQAALSAALQQS) are enriched in low complexity. Phosphoserine is present on residues serine 177, serine 192, and serine 202. The interval 178–200 (IQGSSTSSSASSTLSHGEVKGTS) is disordered. The segment covering 181-192 (SSTSSSASSTLS) has biased composition (low complexity). Positions 217–244 (APPDVTATTSSSSSSLRPANIDLPPSGI) are disordered. At serine 256 the chain carries Phosphoserine.

It belongs to the DIP2 family. In terms of assembly, interacts with alpha-tubulin. In terms of tissue distribution, highly expressed in brain and spinal cord (at protein level). In brain, expression is detected in the main olfactory bulb, cortex, lateral ventricle, cornu ammonis 1, cornu ammonis 3, dentate gyrus, striatum, cerebellar cortex and medial habenula. Expressed primarily in neurons including excitatory pyramidal neurons and inhibitory interneurons.

It is found in the cell projection. Its subcellular location is the dendrite. It localises to the axon. The protein localises to the perikaryon. In terms of biological role, negatively regulates axonal outgrowth and is essential for normal synaptic transmission. Not required for regulation of axon polarity. Promotes acetylation of alpha-tubulin. This chain is Disco-interacting protein 2 homolog B (Dip2b), found in Mus musculus (Mouse).